Reading from the N-terminus, the 214-residue chain is Heat shock 70 kDa protein cognate 1 (214 aa).

Belongs to the heat shock protein 70 family.

The chain is Heat shock 70 kDa protein cognate 1 (Hsc70-1) from Drosophila simulans (Fruit fly).